We begin with the raw amino-acid sequence, 686 residues long: Methionine--tRNA ligase (686 aa).

The short motif at 15–25 (PYANGSIHLGH) is the 'HIGH' region element. C146, C149, C159, and C162 together coordinate Zn(2+). The 'KMSKS' region motif lies at 332-336 (KMSKS). K335 lines the ATP pocket. The 102-residue stretch at 585–686 (AFEAVDMRIA…EGAQPGMRVM (102 aa)) folds into the tRNA-binding domain.

The protein belongs to the class-I aminoacyl-tRNA synthetase family. MetG type 1 subfamily. Homodimer. Zn(2+) serves as cofactor.

The protein resides in the cytoplasm. The catalysed reaction is tRNA(Met) + L-methionine + ATP = L-methionyl-tRNA(Met) + AMP + diphosphate. Is required not only for elongation of protein synthesis but also for the initiation of all mRNA translation through initiator tRNA(fMet) aminoacylation. The polypeptide is Methionine--tRNA ligase (Aliivibrio fischeri (strain MJ11) (Vibrio fischeri)).